The chain runs to 428 residues: Putative zinc metalloprotease SACOL1281 (428 aa).

H21 contacts Zn(2+). E22 is a catalytic residue. H25 contacts Zn(2+). Transmembrane regions (helical) follow at residues 172–194 (FLTL…IGLA), 309–331 (GSTY…GFSF), 352–374 (IISL…LIPI), and 401–420 (TTII…LVTW). The PDZ domain maps to 186-269 (ALVLFIGLAY…TKSVELTPKK (84 aa)).

It belongs to the peptidase M50B family. Zn(2+) serves as cofactor.

It localises to the cell membrane. The protein is Putative zinc metalloprotease SACOL1281 of Staphylococcus aureus (strain COL).